Reading from the N-terminus, the 412-residue chain is Heat stress transcription factor A-3 (412 aa).

Residues 53 to 147 (IPPFLSKTFD…LLKNIHRRRS (95 aa)) mediate DNA binding. The tract at residues 144 to 170 (RRRSPQSNQTCCSSTSQSQGSPTEVGG) is disordered. Low complexity predominate over residues 148 to 166 (PQSNQTCCSSTSQSQGSPT). The interval 159–225 (SQSQGSPTEV…QLLSFLAKLF (67 aa)) is hydrophobic repeat HR-A/B. A coiled-coil region spans residues 166 to 224 (TEVGGEIEKLRKERRALMEEMVELQQQSRGTARHVDTVNQRLKAAEQRQKQLLSFLAKL). A Bipartite nuclear localization signal motif is present at residues 238–254 (KGKEKGGALGLEKARKK). The short motif at 277–286 (DDWERLLMYD) is the AHA1 element. An AHA2 motif is present at residues 381-390 (DVCWEQFAAG).

The protein belongs to the HSF family. Class A subfamily. As to quaternary structure, homotrimer. In terms of processing, exhibits temperature-dependent phosphorylation.

The protein resides in the nucleus. Transcriptional activator that specifically binds DNA sequence 5'-AGAAnnTTCT-3' known as heat shock promoter elements (HSE). Involved in heat stress response. Activated by DREB2A under heat stress. In Arabidopsis thaliana (Mouse-ear cress), this protein is Heat stress transcription factor A-3 (HSFA3).